We begin with the raw amino-acid sequence, 439 residues long: Acyl-coenzyme A thioesterase 9, mitochondrial (439 aa).

The N-terminal 21 residues, 1–21 (MRRAALRLCALGKGQLTPGRG), are a transit peptide targeting the mitochondrion. HotDog ACOT-type domains are found at residues 84 to 209 (KDSY…RDSE) and 289 to 401 (ENSK…EKEV). At Lys103 the chain carries N6-acetyllysine.

The protein belongs to the acyl coenzyme A hydrolase family. In terms of assembly, interacts with NYAP1, NYAP2 and MYO16.

It is found in the mitochondrion. The protein resides in the mitochondrion matrix. The protein localises to the mitochondrion inner membrane. It carries out the reaction butanoyl-CoA + H2O = butanoate + CoA + H(+). The catalysed reaction is propanoyl-CoA + H2O = propanoate + CoA + H(+). The enzyme catalyses hexadecanoyl-CoA + H2O = hexadecanoate + CoA + H(+). It catalyses the reaction octanoyl-CoA + H2O = octanoate + CoA + H(+). It carries out the reaction decanoyl-CoA + H2O = decanoate + CoA + H(+). The catalysed reaction is tetradecanoyl-CoA + H2O = tetradecanoate + CoA + H(+). The enzyme catalyses 4,8-dimethylnonanoyl-CoA + H2O = 4,8-dimethylnonanoate + CoA + H(+). It catalyses the reaction 3-methylbutanoyl-CoA + H2O = 3-methylbutanoate + CoA + H(+). It carries out the reaction 2-methylpropanoyl-CoA + H2O = 2-methylpropanoate + CoA + H(+). It participates in lipid metabolism; fatty acid metabolism. Its activity is regulated as follows. Strongly inhibited by NADH and CoA. Functionally, mitochondrial acyl-CoA thioesterase. Catalyzes the hydrolysis of acyl-CoAs into free fatty acids and coenzyme A (CoA), regulating their respective intracellular levels. Regulates both mitochondrial lipid and amino acid metabolism. This chain is Acyl-coenzyme A thioesterase 9, mitochondrial, found in Homo sapiens (Human).